Reading from the N-terminus, the 344-residue chain is Dihydroorotase (344 aa).

Residues histidine 14 and histidine 16 each coordinate Zn(2+). Residues 16–18 (HLR) and asparagine 42 each bind substrate. Zn(2+) is bound by residues lysine 100, histidine 137, and histidine 175. Lysine 100 bears the N6-carboxylysine mark. Substrate is bound at residue histidine 137. Leucine 220 is a binding site for substrate. Aspartate 248 lines the Zn(2+) pocket. The active site involves aspartate 248. 2 residues coordinate substrate: histidine 252 and alanine 264.

It belongs to the metallo-dependent hydrolases superfamily. DHOase family. Class II DHOase subfamily. As to quaternary structure, homodimer. Zn(2+) serves as cofactor.

It catalyses the reaction (S)-dihydroorotate + H2O = N-carbamoyl-L-aspartate + H(+). The protein operates within pyrimidine metabolism; UMP biosynthesis via de novo pathway; (S)-dihydroorotate from bicarbonate: step 3/3. Functionally, catalyzes the reversible cyclization of carbamoyl aspartate to dihydroorotate. This is Dihydroorotase from Ralstonia nicotianae (strain ATCC BAA-1114 / GMI1000) (Ralstonia solanacearum).